A 314-amino-acid polypeptide reads, in one-letter code: MNGLTVVFAGTPEFGLPCLDALIQSRHHLKAVYTQPDRPAGRGRKLQESPVKEWAINHQIPVYQPLNFKNQEAVDELSALKPDVMVVIAYGLILPKAVLEIPRLGCINVHASLLPRWRGASPIQHAILHGDAESGVTIMQMDVGLDTGPMLCKAACPVTSSDTAGSLHDKLAKMSVKPLLDVLEALASNSAQFELQNNELATYAGKINKEEARINWHQSAVEIDRKIRAFNPWPVAYTLAGELMLRIHQAKATDIMSTEMPGMILNIDKNGMLVATSDNALLVEKIQFPGAKIISVRDWLNSGKTQLHTGLMLQ.

112–115 lines the (6S)-5,6,7,8-tetrahydrofolate pocket; sequence SLLP.

It belongs to the Fmt family.

The enzyme catalyses L-methionyl-tRNA(fMet) + (6R)-10-formyltetrahydrofolate = N-formyl-L-methionyl-tRNA(fMet) + (6S)-5,6,7,8-tetrahydrofolate + H(+). Its function is as follows. Attaches a formyl group to the free amino group of methionyl-tRNA(fMet). The formyl group appears to play a dual role in the initiator identity of N-formylmethionyl-tRNA by promoting its recognition by IF2 and preventing the misappropriation of this tRNA by the elongation apparatus. This chain is Methionyl-tRNA formyltransferase, found in Legionella pneumophila subsp. pneumophila (strain Philadelphia 1 / ATCC 33152 / DSM 7513).